Consider the following 265-residue polypeptide: 4-hydroxy-tetrahydrodipicolinate reductase (265 aa).

Residues 7–12 (GASGRM) and Asp33 contribute to the NAD(+) site. Arg34 provides a ligand contact to NADP(+). NAD(+) contacts are provided by residues 96 to 98 (GTT) and 120 to 123 (AANM). The active-site Proton donor/acceptor is the His153. His154 contacts (S)-2,3,4,5-tetrahydrodipicolinate. Catalysis depends on Lys157, which acts as the Proton donor. 163-164 (GT) contributes to the (S)-2,3,4,5-tetrahydrodipicolinate binding site.

Belongs to the DapB family.

Its subcellular location is the cytoplasm. It carries out the reaction (S)-2,3,4,5-tetrahydrodipicolinate + NAD(+) + H2O = (2S,4S)-4-hydroxy-2,3,4,5-tetrahydrodipicolinate + NADH + H(+). It catalyses the reaction (S)-2,3,4,5-tetrahydrodipicolinate + NADP(+) + H2O = (2S,4S)-4-hydroxy-2,3,4,5-tetrahydrodipicolinate + NADPH + H(+). The protein operates within amino-acid biosynthesis; L-lysine biosynthesis via DAP pathway; (S)-tetrahydrodipicolinate from L-aspartate: step 4/4. In terms of biological role, catalyzes the conversion of 4-hydroxy-tetrahydrodipicolinate (HTPA) to tetrahydrodipicolinate. This chain is 4-hydroxy-tetrahydrodipicolinate reductase, found in Burkholderia ambifaria (strain MC40-6).